Here is a 718-residue protein sequence, read N- to C-terminus: Myeloperoxidase (718 aa).

The N-terminal stretch at 1-15 (MKLLLALAGLLAPLA) is a signal peptide. The propeptide occupies 16-138 (MLQTSNGATP…SSGCAYQDVR (123 aa)). The N-linked (GlcNAc...) asparagine glycan is linked to Asn113. Cys141 and Cys154 are oxidised to a cystine. Asp234 provides a ligand contact to heme b. His235 serves as the catalytic Proton acceptor. Asp236 contributes to the Ca(2+) binding site. Disulfide bonds link Cys255/Cys265 and Cys259/Cys283. Cysteine sulfenic acid (-SOH) is present on Cys290. Asn297 carries an N-linked (GlcNAc...) asparagine glycan. Ca(2+) is bound by residues Thr308, Phe310, Asp312, and Ser314. Asn329 and Asn365 each carry an N-linked (GlcNAc...) asparagine glycan. The cysteines at positions 361 and 372 are disulfide-linked. Residues Glu382 and Met383 each coordinate heme b. The N-linked (GlcNAc...) asparagine glycan is linked to Asn457. Residue His476 participates in heme b binding. Cystine bridges form between Cys580–Cys637 and Cys678–Cys704. Asn711 is a glycosylation site (N-linked (GlcNAc...) asparagine).

The protein belongs to the peroxidase family. XPO subfamily. As to quaternary structure, homodimer; disulfide-linked. Each monomer consists of a light and a heavy chain. Found in a complex with CP and LTF; interacts directly with CP, which protects CP antioxidant properties by MPO. Requires Ca(2+) as cofactor. It depends on heme b as a cofactor.

It is found in the lysosome. The catalysed reaction is chloride + H2O2 + H(+) = hypochlorous acid + H2O. Functionally, part of the host defense system of polymorphonuclear leukocytes. It is responsible for microbicidal activity against a wide range of organisms. In the stimulated PMN, MPO catalyzes the production of hypohalous acids, primarily hypochlorous acid in physiologic situations, and other toxic intermediates that greatly enhance PMN microbicidal activity. Mediates the proteolytic cleavage of alpha-1-microglobulin to form t-alpha-1-microglobulin, which potently inhibits oxidation of low density lipoprotein particles and limits vascular damage. In Mus musculus (Mouse), this protein is Myeloperoxidase (Mpo).